The following is a 504-amino-acid chain: Protein phosphatase 1J (504 aa).

2 disordered regions span residues 1-102 (MLNR…RLPW) and 194-217 (PLCL…SPQS). Over residues 14 to 23 (SSSGTSSQRS) the composition is skewed to low complexity. A Phosphothreonine modification is found at threonine 41. Residues 59–73 (TAETPVSFSRPTFLQ) are compositionally biased toward polar residues. Phosphoserine occurs at positions 65 and 75. Residues 103–496 (STGYAEVINA…DDISVFVIPL (394 aa)) enclose the PPM-type phosphatase domain. Residues 197 to 217 (LPSTPGTPGVSSPSQLVSPQS) show a composition bias toward low complexity.

The protein belongs to the PP2C family. Interacts with UBE2I/UBC9.

It carries out the reaction O-phospho-L-seryl-[protein] + H2O = L-seryl-[protein] + phosphate. It catalyses the reaction O-phospho-L-threonyl-[protein] + H2O = L-threonyl-[protein] + phosphate. The sequence is that of Protein phosphatase 1J (Ppm1j) from Rattus norvegicus (Rat).